We begin with the raw amino-acid sequence, 333 residues long: Cytosolic Fe-S cluster assembly factor NBP35 (333 aa).

[4Fe-4S] cluster is bound by residues C32, C46, C49, and C55. Residue 85–92 (GKGGVGKS) participates in ATP binding. The [4Fe-4S] cluster site is built by C258 and C261.

The protein belongs to the Mrp/NBP35 ATP-binding proteins family. NUBP1/NBP35 subfamily. In terms of assembly, heterotetramer of 2 NBP35 and 2 CFD1 chains. It depends on [4Fe-4S] cluster as a cofactor.

Its subcellular location is the cytoplasm. It is found in the nucleus. In terms of biological role, component of the cytosolic iron-sulfur (Fe/S) protein assembly (CIA) machinery. Required for maturation of extramitochondrial Fe-S proteins. The NBP35-CFD1 heterotetramer forms a Fe-S scaffold complex, mediating the de novo assembly of an Fe-S cluster and its transfer to target apoproteins. Required for biogenesis and export of both ribosomal subunits, which may reflect a role in assembly of the Fe/S clusters in RLI1, a protein which performs rRNA processing and ribosome export. This Eremothecium gossypii (strain ATCC 10895 / CBS 109.51 / FGSC 9923 / NRRL Y-1056) (Yeast) protein is Cytosolic Fe-S cluster assembly factor NBP35.